The chain runs to 281 residues: Merozoite surface protein 2 (281 aa).

Residues 1–20 (MKVIKTLSIINFFIFVTFNI) form the signal peptide. N-linked (GlcNAc...) asparagine glycosylation is found at asparagine 22 and asparagine 36. The tract at residues 42 to 242 (SMEESNPPTG…DSQKECTDGN (201 aa)) is disordered. The segment at 44–207 (EESNPPTGAS…EQTESPELQS (164 aa)) is polymorphic region. 3 consecutive repeat copies span residues 51 to 58 (GASGRAGA), 59 to 66 (GASGRAGA), and 67 to 74 (GASGRAGA). The 3 X 8 AA tandem repeats of G-A-S-G-R-A-G-A stretch occupies residues 51 to 74 (GASGRAGAGASGRAGAGASGRAGA). Positions 54-76 (GRAGAGASGRAGAGASGRAGAGA) are enriched in gly residues. Low complexity predominate over residues 77 to 133 (GAVASAGSGDGAVASAGNGANPGADAKRSTSTPATTTTTTTTNDAEASTSTSSENPN). Polar residues-rich tracts occupy residues 150–174 (NKAN…NVPP) and 181–209 (KSPT…QSAP). Asparagine 158 is a glycosylation site (N-linked (GlcNAc...) asparagine). Asparagine 230 carries an N-linked (GlcNAc...) asparagine glycan. Residues cysteine 238 and cysteine 246 are joined by a disulfide bond. N-linked (GlcNAc...) asparagine glycosylation is found at asparagine 254 and asparagine 255. A lipid anchor (GPI-anchor amidated asparagine) is attached at asparagine 255. A propeptide spans 256–281 (SSNIASINKFVVLISATLVLSFAIFI) (removed in mature form).

The protein localises to the cell membrane. May play a role in the merozoite attachment to the erythrocyte. The polypeptide is Merozoite surface protein 2 (Plasmodium falciparum (isolate thtn / Thailand)).